We begin with the raw amino-acid sequence, 458 residues long: Protein U54 (458 aa).

7 N-linked (GlcNAc...) asparagine; by host glycosylation sites follow: Asn-76, Asn-102, Asn-281, Asn-321, Asn-346, Asn-434, and Asn-451.

The protein belongs to the herpesviridae UL82 family.

This chain is Protein U54 (U54), found in Homo sapiens (Human).